Here is a 322-residue protein sequence, read N- to C-terminus: ATP-dependent 6-phosphofructokinase (322 aa).

Glycine 12 serves as a coordination point for ATP. An ADP-binding site is contributed by 22 to 26 (RATAK). Residues 73–74 (RS) and 103–106 (GDGS) each bind ATP. Residue aspartate 104 participates in Mg(2+) binding. 127–129 (TID) contributes to the substrate binding site. Aspartate 129 serves as the catalytic Proton acceptor. ADP is bound at residue arginine 156. Substrate-binding positions include arginine 164 and 171–173 (MGR). Residues 187–189 (GGD) and 215–217 (KLH) each bind ADP. Residues glutamate 224, arginine 245, and 251 to 254 (HIQR) contribute to the substrate site.

The protein belongs to the phosphofructokinase type A (PFKA) family. ATP-dependent PFK group I subfamily. Prokaryotic clade 'B1' sub-subfamily. In terms of assembly, homotetramer. Mg(2+) is required as a cofactor.

It is found in the cytoplasm. The catalysed reaction is beta-D-fructose 6-phosphate + ATP = beta-D-fructose 1,6-bisphosphate + ADP + H(+). It participates in carbohydrate degradation; glycolysis; D-glyceraldehyde 3-phosphate and glycerone phosphate from D-glucose: step 3/4. With respect to regulation, allosterically activated by ADP and other diphosphonucleosides, and allosterically inhibited by phosphoenolpyruvate. Its function is as follows. Catalyzes the phosphorylation of D-fructose 6-phosphate to fructose 1,6-bisphosphate by ATP, the first committing step of glycolysis. The protein is ATP-dependent 6-phosphofructokinase of Fusobacterium nucleatum subsp. nucleatum (strain ATCC 25586 / DSM 15643 / BCRC 10681 / CIP 101130 / JCM 8532 / KCTC 2640 / LMG 13131 / VPI 4355).